A 70-amino-acid polypeptide reads, in one-letter code: Large ribosomal subunit protein uL29 (70 aa).

This sequence belongs to the universal ribosomal protein uL29 family.

In Thermosynechococcus vestitus (strain NIES-2133 / IAM M-273 / BP-1), this protein is Large ribosomal subunit protein uL29.